A 339-amino-acid polypeptide reads, in one-letter code: DNA-directed RNA polymerase subunit alpha (339 aa).

The alpha N-terminal domain (alpha-NTD) stretch occupies residues 1 to 233; it reads MVREEVAGST…DLFLPFLHAE (233 aa). The tract at residues 264-339 is alpha C-terminal domain (alpha-CTD); sequence KKGIPLNCIF…IDLLKNKLSF (76 aa).

It belongs to the RNA polymerase alpha chain family. In terms of assembly, in plastids the minimal PEP RNA polymerase catalytic core is composed of four subunits: alpha, beta, beta', and beta''. When a (nuclear-encoded) sigma factor is associated with the core the holoenzyme is formed, which can initiate transcription.

It is found in the plastid. The protein localises to the chloroplast. The catalysed reaction is RNA(n) + a ribonucleoside 5'-triphosphate = RNA(n+1) + diphosphate. Functionally, DNA-dependent RNA polymerase catalyzes the transcription of DNA into RNA using the four ribonucleoside triphosphates as substrates. This chain is DNA-directed RNA polymerase subunit alpha, found in Festucopsis festucoides.